The following is a 232-amino-acid chain: Phosphatidylserine decarboxylase proenzyme (232 aa).

S201 serves as the catalytic Schiff-base intermediate with substrate; via pyruvic acid. Pyruvic acid (Ser); by autocatalysis is present on S201.

It belongs to the phosphatidylserine decarboxylase family. PSD-A subfamily. In terms of assembly, heterodimer of a large membrane-associated beta subunit and a small pyruvoyl-containing alpha subunit. Pyruvate is required as a cofactor. Is synthesized initially as an inactive proenzyme. Formation of the active enzyme involves a self-maturation process in which the active site pyruvoyl group is generated from an internal serine residue via an autocatalytic post-translational modification. Two non-identical subunits are generated from the proenzyme in this reaction, and the pyruvate is formed at the N-terminus of the alpha chain, which is derived from the carboxyl end of the proenzyme. The post-translation cleavage follows an unusual pathway, termed non-hydrolytic serinolysis, in which the side chain hydroxyl group of the serine supplies its oxygen atom to form the C-terminus of the beta chain, while the remainder of the serine residue undergoes an oxidative deamination to produce ammonia and the pyruvoyl prosthetic group on the alpha chain.

Its subcellular location is the cell membrane. It carries out the reaction a 1,2-diacyl-sn-glycero-3-phospho-L-serine + H(+) = a 1,2-diacyl-sn-glycero-3-phosphoethanolamine + CO2. The protein operates within phospholipid metabolism; phosphatidylethanolamine biosynthesis; phosphatidylethanolamine from CDP-diacylglycerol: step 2/2. Functionally, catalyzes the formation of phosphatidylethanolamine (PtdEtn) from phosphatidylserine (PtdSer). This is Phosphatidylserine decarboxylase proenzyme from Mycolicibacterium smegmatis (strain ATCC 700084 / mc(2)155) (Mycobacterium smegmatis).